The chain runs to 499 residues: Maturase K (499 aa).

The protein belongs to the intron maturase 2 family. MatK subfamily.

Its subcellular location is the plastid. The protein localises to the chloroplast. In terms of biological role, usually encoded in the trnK tRNA gene intron. Probably assists in splicing its own and other chloroplast group II introns. In Gymnocladus dioicus (Kentucky coffee tree), this protein is Maturase K.